The sequence spans 797 residues: Sodium/hydrogen exchanger 4 (797 aa).

Topologically, residues Met-1–Asn-13 are cytoplasmic. An intramembrane region (name=A/M1) is located at residues Trp-14–Ser-28. The Cytoplasmic portion of the chain corresponds to Tyr-29–Ile-69. Residues Glu-32–Asp-52 are disordered. Positions Pro-70–Tyr-90 form an intramembrane region, name=B/M2. Topologically, residues His-91–Pro-94 are cytoplasmic. The chain crosses the membrane as a helical span at residues His-95–Ile-114. Residues Phe-115–Ser-127 lie on the Extracellular side of the membrane. Residues Ser-128 to Thr-148 traverse the membrane as a helical segment. Residues Arg-149–Asn-154 lie on the Cytoplasmic side of the membrane. The helical transmembrane segment at Ile-155 to Leu-175 threads the bilayer. Topologically, residues Ser-176–Leu-194 are extracellular. The chain crosses the membrane as a helical span at residues His-195 to Phe-215. Residues Glu-216–Met-226 lie on the Cytoplasmic side of the membrane. Residues Met-227 to Ile-247 traverse the membrane as a helical segment. Residues Ala-248 to Phe-270 are Extracellular-facing. The helical transmembrane segment at Val-271–Ile-291 threads the bilayer. Residues Thr-292–Leu-304 lie on the Cytoplasmic side of the membrane. A helical transmembrane segment spans residues Ile-305–Ile-325. The Extracellular portion of the chain corresponds to Leu-326 to Lys-352. A glycan (N-linked (GlcNAc...) asparagine) is linked at Asn-342. The helical transmembrane segment at Tyr-353–Ser-373 threads the bilayer. At Thr-374–Ala-384 the chain is on the cytoplasmic side. Residues Phe-385–Phe-405 form a helical membrane-spanning segment. Over Tyr-406–Asp-420 the chain is Extracellular. The name=L intramembrane region spans Gln-421–Leu-441. Over Pro-442–Lys-450 the chain is Extracellular. The helical transmembrane segment at Leu-451–Ile-471 threads the bilayer. Residues Gly-472–Lys-797 are Cytoplasmic-facing. Residues Tyr-759–Thr-769 are compositionally biased toward acidic residues. The disordered stretch occupies residues Tyr-759 to Lys-797. Residues Ser-783 to Lys-797 show a composition bias toward basic residues.

The protein belongs to the monovalent cation:proton antiporter 1 (CPA1) transporter (TC 2.A.36) family. Homodimer; each protomer has one site for sodium and one site for proton binding. Interacts with CHP1 and CHP2. Post-translationally, may be phosphorylated. In terms of tissue distribution, expressed in kidney. Expressed in uterus and endometrial epithelial cells. Expressed in the inner segments of inner medullary collecting ducts (IMCD) in kidney. Expressed in AGTR1-positive neurons in organum vasculosum of the lamina terminalis (at protein level).

The protein resides in the basolateral cell membrane. The protein localises to the apical cell membrane. It is found in the zymogen granule membrane. It catalyses the reaction Na(+)(in) + H(+)(out) = Na(+)(out) + H(+)(in). The catalysed reaction is Na(+)(out) + NH4(+)(in) = Na(+)(in) + NH4(+)(out). With respect to regulation, up-regulated in response to high extracellular sodium concentration. Its function is as follows. Electroneutral antiporter that exchanges sodium for protons or ammonium ions at the basolateral membrane of epithelia to regulate cell volume and intracellular pH upon hypertonic conditions. As part of transcellular ammonia transport in renal tubules, mediates basolateral ammonium extrusion in the medullary thick ascending limb, regulating the corticopapillary ammonium gradient and overall renal acid excretion. Mediates sodium:proton exchange in gastric parietal cells secondary to cAMP-dependent acid secretion and hyperosmolarity. Possibly coupled to chloride:bicarbonate antiporter, enables loading of parietal cells with sodium and chloride ions to maintain cell volume and normal gastric acid secretion. Functions as a sodium sensor in neurons of organum vasculosum of the lamina terminalis where it regulates water intake in response to increased sodium concentration in body fluids. This Mus musculus (Mouse) protein is Sodium/hydrogen exchanger 4 (Slc9a4).